Reading from the N-terminus, the 102-residue chain is Small ribosomal subunit protein uS10 (102 aa).

Belongs to the universal ribosomal protein uS10 family. In terms of assembly, part of the 30S ribosomal subunit.

Functionally, involved in the binding of tRNA to the ribosomes. This Nitrosopumilus maritimus (strain SCM1) protein is Small ribosomal subunit protein uS10.